Here is a 193-residue protein sequence, read N- to C-terminus: Probable 3' cyclic ADP-D-ribose synthase ThsB' (193 aa).

Homodimer.

It carries out the reaction NAD(+) = 3'cADPR + nicotinamide + H(+). In terms of biological role, TIR-like domain-containing component of the Thoeris antiviral defense system, composed of ThsA and ThsB and ThsB'. In the presence of NAD(+) produces a signaling molecule that activates cognate ThsA (AC J8G6Z1) to hydrolyze NAD(+). The signaling molecule is a cyclic ADP-D-ribose isomer and may be 3' cyclic ADP-D-ribose (3'cADPR); it is not 2'cADPR. The sequence is that of Probable 3' cyclic ADP-D-ribose synthase ThsB' from Bacillus cereus (strain MSX-D12).